The chain runs to 271 residues: Formamidopyrimidine-DNA glycosylase (271 aa).

The active-site Schiff-base intermediate with DNA is the Pro2. The active-site Proton donor is Glu3. Lys57 acts as the Proton donor; for beta-elimination activity in catalysis. DNA contacts are provided by His90, Arg109, and Lys151. The FPG-type zinc finger occupies 236–270 (HVYGRGGKTCTQCGHMLSEIKLGQRATVFCSLCQQ). The Proton donor; for delta-elimination activity role is filled by Arg260.

It belongs to the FPG family. As to quaternary structure, monomer. Requires Zn(2+) as cofactor.

It catalyses the reaction Hydrolysis of DNA containing ring-opened 7-methylguanine residues, releasing 2,6-diamino-4-hydroxy-5-(N-methyl)formamidopyrimidine.. It carries out the reaction 2'-deoxyribonucleotide-(2'-deoxyribose 5'-phosphate)-2'-deoxyribonucleotide-DNA = a 3'-end 2'-deoxyribonucleotide-(2,3-dehydro-2,3-deoxyribose 5'-phosphate)-DNA + a 5'-end 5'-phospho-2'-deoxyribonucleoside-DNA + H(+). In terms of biological role, involved in base excision repair of DNA damaged by oxidation or by mutagenic agents. Acts as a DNA glycosylase that recognizes and removes damaged bases. Has a preference for oxidized purines, such as 7,8-dihydro-8-oxoguanine (8-oxoG). Has AP (apurinic/apyrimidinic) lyase activity and introduces nicks in the DNA strand. Cleaves the DNA backbone by beta-delta elimination to generate a single-strand break at the site of the removed base with both 3'- and 5'-phosphates. This chain is Formamidopyrimidine-DNA glycosylase, found in Shewanella pealeana (strain ATCC 700345 / ANG-SQ1).